Here is a 707-residue protein sequence, read N- to C-terminus: MDSCHKIDYGLYALEILAQYHNVSVNPEEIKHRFDTDGTGLGLTSWLLAAKSLELKVKQVKKTIDRLNFISLPALVWREDGRHFILTKVSKEANRYLIFDLEQRNPRVLEQSEFEALYQGHIILIASRSSVTGKLAKFDFTWFIPAIIKYRKIFIETLVVSVFLQLFALITPLFFQVVMDKVLVHRGFSTLNVITVALSVVVVFEIILSGLRTYIFAHSTSRIDVELGAKLFRHLLALPISYFESRRVGDTVARVRELDQIRNFLTGQALTSVLDLLFSFIFFAVMWYYSPKLTLVILFSLPCYAAWSVFISPILRRRLDDKFSRNADNQSFLVESVTAINTIKAMAVSPQMTNIWDKQLAGYVAAGFKVTVLATIGQQGIQLIQKTVMIINLWLGAHLVISGDLSIGQLIAFNMLAGQIVAPVIRLAQIWQDFQQVGISVTRLGDVLNSPTESYHGKLALPEINGNITFRNIRFRYKPDSPVILDNINLSIKQGEVIGIVGRSGSGKSTLTKLIQRFYIPENGQVLIDGHDLALADPNWLRRQVGVVLQDNVLLNRSIIDNISLANPGMSVEKVIYAAKLAGAHDFISELREGYNTIVGEQGAGLSGGQRQRIAIARALVNNPKILIFDEATSALDYESEHIIMRNMHKICKGRTVIIIAHRLSTVKNADRIIVMEKGKIVEQGKHKELLSEPESLYSYLYQLQSD.

Residues 3 to 125 form the Peptidase C39 domain; it reads SCHKIDYGLY…ALYQGHIILI (123 aa). His-83 is a catalytic residue. Residues 154 to 436 form the ABC transmembrane type-1 domain; the sequence is FIETLVVSVF…LAQIWQDFQQ (283 aa). Helical transmembrane passes span 158 to 178, 191 to 211, 269 to 289, 295 to 315, and 388 to 408; these read LVVS…FQVV, LNVI…LSGL, ALTS…MWYY, LVIL…SPIL, and VMII…LSIG. One can recognise an ABC transporter domain in the interval 468-703; that stretch reads ITFRNIRFRY…PESLYSYLYQ (236 aa). 502–509 contacts ATP; that stretch reads GRSGSGKS.

This sequence belongs to the ABC transporter superfamily. Protein-1 exporter (TC 3.A.1.109) family. As to quaternary structure, homodimer.

The protein resides in the cell inner membrane. Part of the ABC transporter complex HlyBD involved in hemolysin export. Transmembrane domains (TMD) form a pore in the inner membrane and the ATP-binding domain (NBD) is responsible for energy generation. This chain is Alpha-hemolysin translocation ATP-binding protein HlyB (hlyB), found in Escherichia coli O6:H1 (strain CFT073 / ATCC 700928 / UPEC).